Reading from the N-terminus, the 51-residue chain is Ovomucoid (51 aa).

Residues 1–49 form the Kazal-like domain; sequence VDCSEYPQPACTTERRPVCGSNNKTYSNKCNFCNAVVKSNGTLTVSHFG. Intrachain disulfides connect Cys-3–Cys-33, Cys-11–Cys-30, and Cys-19–Cys-51. Residue Asn-40 is glycosylated (N-linked (GlcNAc...) asparagine).

It is found in the secreted. This is Ovomucoid from Polyplectron napoleonis (Palawan peacock-pheasant).